The following is a 485-amino-acid chain: NADH-quinone oxidoreductase subunit N (485 aa).

14 consecutive transmembrane segments (helical) span residues 8–28 (LIAL…MLSI), 35–55 (FLNA…LWFV), 71–91 (GFAM…CTFA), 105–125 (FYLL…ANHL), 127–147 (SLFL…GYAF), 159–179 (YTIL…LVYA), 203–223 (LLAG…LVPF), 235–255 (PAPV…GVVM), 271–291 (VVLA…ALSQ), 297–317 (LLGY…IALQ), 326–346 (VGVY…VVSL), 373–393 (AAVM…LGFI), 408–430 (WWLV…RVAV), and 455–475 (IVVL…QPLI).

It belongs to the complex I subunit 2 family. NDH-1 is composed of 13 different subunits. Subunits NuoA, H, J, K, L, M, N constitute the membrane sector of the complex.

The protein localises to the cell inner membrane. The catalysed reaction is a quinone + NADH + 5 H(+)(in) = a quinol + NAD(+) + 4 H(+)(out). NDH-1 shuttles electrons from NADH, via FMN and iron-sulfur (Fe-S) centers, to quinones in the respiratory chain. The immediate electron acceptor for the enzyme in this species is believed to be ubiquinone. Couples the redox reaction to proton translocation (for every two electrons transferred, four hydrogen ions are translocated across the cytoplasmic membrane), and thus conserves the redox energy in a proton gradient. This is NADH-quinone oxidoreductase subunit N from Escherichia coli (strain ATCC 8739 / DSM 1576 / NBRC 3972 / NCIMB 8545 / WDCM 00012 / Crooks).